The chain runs to 612 residues: Dihydroxy-acid dehydratase (612 aa).

Mg(2+) is bound at residue Asp81. Cys122 lines the [2Fe-2S] cluster pocket. Residues Asp123 and Lys124 each coordinate Mg(2+). N6-carboxylysine is present on Lys124. [2Fe-2S] cluster is bound at residue Cys193. Glu489 lines the Mg(2+) pocket. Residue Ser515 is the Proton acceptor of the active site.

The protein belongs to the IlvD/Edd family. As to quaternary structure, homodimer. The cofactor is [2Fe-2S] cluster. Mg(2+) is required as a cofactor.

It catalyses the reaction (2R)-2,3-dihydroxy-3-methylbutanoate = 3-methyl-2-oxobutanoate + H2O. The enzyme catalyses (2R,3R)-2,3-dihydroxy-3-methylpentanoate = (S)-3-methyl-2-oxopentanoate + H2O. The protein operates within amino-acid biosynthesis; L-isoleucine biosynthesis; L-isoleucine from 2-oxobutanoate: step 3/4. It functions in the pathway amino-acid biosynthesis; L-valine biosynthesis; L-valine from pyruvate: step 3/4. Functionally, functions in the biosynthesis of branched-chain amino acids. Catalyzes the dehydration of (2R,3R)-2,3-dihydroxy-3-methylpentanoate (2,3-dihydroxy-3-methylvalerate) into 2-oxo-3-methylpentanoate (2-oxo-3-methylvalerate) and of (2R)-2,3-dihydroxy-3-methylbutanoate (2,3-dihydroxyisovalerate) into 2-oxo-3-methylbutanoate (2-oxoisovalerate), the penultimate precursor to L-isoleucine and L-valine, respectively. The protein is Dihydroxy-acid dehydratase of Ectopseudomonas mendocina (strain ymp) (Pseudomonas mendocina).